Here is a 330-residue protein sequence, read N- to C-terminus: Probable UDP-3-O-acylglucosamine N-acyltransferase 1, mitochondrial (330 aa).

Residues 1 to 52 (MANSLRTLFSVSTHGVFLNKRSSYRVRKVFVGMPLRICSEIPRFVSVSCIRS) constitute a mitochondrion transit peptide. 160–162 (FGF) contacts UDP-N-acetyl-alpha-D-glucosamine. 2 residues coordinate hexadecanoate: Asp-210 and Gln-214. His-217 serves as the catalytic Proton acceptor. UDP-N-acetyl-alpha-D-glucosamine contacts are provided by Asn-218, Ser-236, and His-254.

Belongs to the transferase hexapeptide repeat family. LpxD subfamily. As to quaternary structure, homotrimer.

It is found in the mitochondrion. It catalyses the reaction a UDP-3-O-[(3R)-3-hydroxyacyl]-alpha-D-glucosamine + a (3R)-hydroxyacyl-[ACP] = a UDP-2-N,3-O-bis[(3R)-3-hydroxyacyl]-alpha-D-glucosamine + holo-[ACP] + H(+). It functions in the pathway glycolipid biosynthesis; lipid IV(A) biosynthesis; lipid IV(A) from (3R)-3-hydroxytetradecanoyl-[acyl-carrier-protein] and UDP-N-acetyl-alpha-D-glucosamine: step 3/6. Functionally, involved in the biosynthesis of lipid A, a phosphorylated glycolipid that in bacteria anchors the lipopolysaccharide to the outer membrane of the cell. Lipid A-like molecules in plants may serve as structural components of the outer membranes of mitochondria and/or chloroplasts, or may be involved in signal transduction or plant defense responses. In Arabidopsis thaliana (Mouse-ear cress), this protein is Probable UDP-3-O-acylglucosamine N-acyltransferase 1, mitochondrial (LPXD1).